The sequence spans 397 residues: Enoyl-[acyl-carrier-protein] reductase [NADH] FabV (397 aa).

Residues 48 to 53, 74 to 75, 111 to 112, and 139 to 140 contribute to the NAD(+) site; these read GASTGY, FE, DA, and LA. Tyr-225 contacts substrate. The Proton donor role is filled by Tyr-235. NAD(+) contacts are provided by residues Lys-244 and 273-275; that span reads VVT.

Belongs to the TER reductase family. In terms of assembly, monomer.

It carries out the reaction a 2,3-saturated acyl-[ACP] + NAD(+) = a (2E)-enoyl-[ACP] + NADH + H(+). Its pathway is lipid metabolism; fatty acid biosynthesis. Resistant to triclosan. Its function is as follows. Involved in the final reduction of the elongation cycle of fatty acid synthesis (FAS II). Catalyzes the NADH-dependent reduction of the carbon-carbon double bond in the enoyl moiety that is covalently linked to an acyl carrier protein (ACP). This is Enoyl-[acyl-carrier-protein] reductase [NADH] FabV from Aeromonas salmonicida (strain A449).